The primary structure comprises 339 residues: Adenylosuccinate synthetase (339 aa).

GTP-binding positions include 12–18 and 42–44; these read GDEGKGS and GHS. The Proton acceptor role is filled by Asp13. Residues Asp13 and Gly42 each contribute to the Mg(2+) site. Residues 13–16, 40–43, Thr127, Arg141, Gln179, Thr194, and Arg256 each bind IMP; these read DEGK and NAGH. His43 functions as the Proton donor in the catalytic mechanism. 252–258 is a substrate binding site; sequence TVTGRRR. GTP contacts are provided by residues Arg258, 284 to 286, and 324 to 326; these read MLD and KTG.

Belongs to the adenylosuccinate synthetase family. Homodimer. The cofactor is Mg(2+).

The protein localises to the cytoplasm. It carries out the reaction IMP + L-aspartate + GTP = N(6)-(1,2-dicarboxyethyl)-AMP + GDP + phosphate + 2 H(+). The protein operates within purine metabolism; AMP biosynthesis via de novo pathway; AMP from IMP: step 1/2. Plays an important role in the de novo pathway of purine nucleotide biosynthesis. Catalyzes the first committed step in the biosynthesis of AMP from IMP. The polypeptide is Adenylosuccinate synthetase (Pyrococcus sp. (strain ST700)).